The chain runs to 309 residues: RHOMBOID-like protein 5 (309 aa).

The next 7 membrane-spanning stretches (helical) occupy residues 27 to 47 (IPVPWVAWLVPLILAANFVTF), 113 to 133 (IWLHGGFLHLMANMISLMCIG), 140 to 160 (FGFMRIGALYVISGLGGSLVS), 170 to 190 (VSVGASGALFGLLGAMLSELI), 200 to 220 (CTALMTLILIIVLNLSVGFLP), 222 to 242 (VDNSAHFGGFLAGFFLGFVLL), and 274 to 294 (IFRFTSLAILLAGFIAGYTKL). Residue Ser-175 is the Nucleophile of the active site. His-227 serves as the catalytic Charge relay system.

Belongs to the peptidase S54 family.

Its subcellular location is the membrane. The enzyme catalyses Cleaves type-1 transmembrane domains using a catalytic dyad composed of serine and histidine that are contributed by different transmembrane domains.. In terms of biological role, probable rhomboid-type serine protease that catalyzes intramembrane proteolysis. May function in reproductive organs maturation. The sequence is that of RHOMBOID-like protein 5 from Arabidopsis thaliana (Mouse-ear cress).